The sequence spans 716 residues: Translation initiation factor IF-2 (716 aa).

The interval 52–135 (QQESNNNTKQ…PAAEPKEMPS (84 aa)) is disordered. Over residues 56 to 125 (NNNTKQNTQN…KNNKGNKNNK (70 aa)) the composition is skewed to low complexity. Residues 218–387 (ERPAVVTIMG…GLVAEVQELK (170 aa)) form the tr-type G domain. The segment at 227 to 234 (GHVDHGKT) is G1. Residue 227-234 (GHVDHGKT) participates in GTP binding. Residues 252-256 (GITQH) are G2. The segment at 273-276 (DTPG) is G3. GTP is bound by residues 273–277 (DTPGH) and 327–330 (NKID). Positions 327 to 330 (NKID) are G4. The tract at residues 363 to 365 (SAL) is G5.

It belongs to the TRAFAC class translation factor GTPase superfamily. Classic translation factor GTPase family. IF-2 subfamily.

It is found in the cytoplasm. Its function is as follows. One of the essential components for the initiation of protein synthesis. Protects formylmethionyl-tRNA from spontaneous hydrolysis and promotes its binding to the 30S ribosomal subunits. Also involved in the hydrolysis of GTP during the formation of the 70S ribosomal complex. This is Translation initiation factor IF-2 from Staphylococcus haemolyticus (strain JCSC1435).